The following is an 894-amino-acid chain: MNQIEPGVQYNYVYEDDEYMIQEEEWDRDLLLDPAWEKQQRKTFTAWCNSHLRKAGTQIENIEEDFRNGLKLMLLLEVISGERLPKPDRGKMRFHKIANVNKALDYIASKGVKLVSIGAEEIVDGNVKMTLGMIWTIILRFAIQDISVEETSAKEGLLLWCQRKTAPYRNVNIQNFHTSWKDGLGLCALIHRHRPDLIDYSKLNKDDPIGNINLAMEIAEKHLDIPKMLDAEDIVNTPKPDERAIMTYVSCFYHAFAGAEQAETAANRICKVLAVNQENERLMEEYERLASELLEWIRRTIPWLENRTPEKTMQAMQKKLEDFRDYRRKHKPPKVQEKCQLEINFNTLQTKLRISNRPAFMPSEGKMVSDIAGAWQRLEQAEKGYEEWLLNEIRRLERVEHLAEKFRQKASTHETWAYGKEQILLQKDYESSTLTEVRALLRKHEAFESDLAAHQDRVEQIAAIAQELNELDYHDAVNVNDRCQKICDQWDRLGTLTQKRREALERTEKLLETIDQLHLEFAKRAAPFNNWMEGAMEDLQDMFIVHSIEEIQSLITAHEQFKATLPEADGERQSILAIQNEVEKVIQSYSIRISSSNPYSTVTVDEIRSKWDKVKQLVPIRDQSLQEELARQHANERLRRQFAAQANAIGPWIQNKMEEIARSSIQITGALEDQMNQLKQYEHNIINYKNNIDKLEGDHQLIQEALVFDNKHTNYTMEHIRVGWELLLTTIARTINEVETQILTRDAKGITQEQMNEFRASFNHFDRRKNGLMDHEDFRACLISMGYDLGEAEFARIMTLVDPNGQGTVTFQSFIDFMTRETADTDTAEQVIASFRILASDKPYILAEELRRELPPDQAQYCIKRMPAYSGPGSVPGALDYTAFSSALYGESDL.

The interval 1-254 (MNQIEPGVQY…IMTYVSCFYH (254 aa)) is actin-binding. Calponin-homology (CH) domains are found at residues 38–142 (KQQR…LRFA) and 151–257 (TSAK…HAFA). Phosphothreonine is present on threonine 237. 4 Spectrin repeats span residues 281–391 (RLME…WLLN), 401–506 (HLAE…ALER), 516–627 (QLHL…SLQE), and 637–740 (RLRR…EVET). EF-hand domains lie at 753-788 (EQMNEFRASFNHFDRRKNGLMDHEDFRACLISMGYD) and 789-824 (LGEAEFARIMTLVDPNGQGTVTFQSFIDFMTRETAD). Ca(2+)-binding residues include aspartate 766, asparagine 770, aspartate 777, aspartate 802, asparagine 804, and threonine 808.

Belongs to the alpha-actinin family. In terms of assembly, homodimer; antiparallel. Also forms heterodimers with ACTN3. Interacts with ADAM12, MYOZ1, MYOZ2 and MYOZ3. Interacts via its C-terminal region with the LDB3 PDZ domain. Interacts with XIRP2. Interacts with DST (via N-terminus). Interacts with PARVB. Interacts with SYNPO2. In terms of processing, ubiquitinated by FBXL22, leading to proteasomal degradation.

It is found in the cytoplasm. The protein resides in the myofibril. It localises to the sarcomere. The protein localises to the z line. F-actin cross-linking protein which is thought to anchor actin to a variety of intracellular structures. This is a bundling protein. The sequence is that of Alpha-actinin-2 (ACTN2) from Bos taurus (Bovine).